The sequence spans 586 residues: Putative butyrophilin subfamily 2 member A3 (586 aa).

The N-terminal stretch at 1-27 (MEPAAALHFSRPASLLLLLSLCALVSA) is a signal peptide. Residues 28–139 (QVTVVGPTDP…SCNEAILHLV (112 aa)) enclose the Ig-like V-type domain. The Extracellular segment spans residues 28 to 246 (QVTVVGPTDP…SFMPSRSPCV (219 aa)). 4 N-linked (GlcNAc...) asparagine glycosylation sites follow: asparagine 45, asparagine 112, asparagine 214, and asparagine 220. Cysteine 50 and cysteine 123 are joined by a disulfide. The chain crosses the membrane as a helical span at residues 247 to 267 (VILPVIMIILMIPIAICIYWI). Residues 268–586 (NNLQKEKKDS…VPQLPARKKV (319 aa)) lie on the Cytoplasmic side of the membrane. In terms of domain architecture, B30.2/SPRY spans 281-474 (TFNLCLSLAG…ILICSAFTGA (194 aa)).

Belongs to the immunoglobulin superfamily. BTN/MOG family.

The protein localises to the membrane. This chain is Putative butyrophilin subfamily 2 member A3 (BTN2A3P), found in Homo sapiens (Human).